A 66-amino-acid polypeptide reads, in one-letter code: MPKMKTKSAAKKRFKITGTGKIKAAAAGKRHGMIKRSNKFIRDARGTMVLADADAKIVKQFLPNGL.

This sequence belongs to the bacterial ribosomal protein bL35 family.

The polypeptide is Large ribosomal subunit protein bL35 (Brucella anthropi (strain ATCC 49188 / DSM 6882 / CCUG 24695 / JCM 21032 / LMG 3331 / NBRC 15819 / NCTC 12168 / Alc 37) (Ochrobactrum anthropi)).